A 318-amino-acid polypeptide reads, in one-letter code: Electron transfer flavoprotein subunit alpha (318 aa).

257–285 (LYIALGISGAIQHRAGMQTSKTIVAVNKD) is an FAD binding site.

The protein belongs to the ETF alpha-subunit/FixB family. Heterodimer of an alpha and a beta subunit. FAD serves as cofactor.

Functionally, the electron transfer flavoprotein serves as a specific electron acceptor for other dehydrogenases. It transfers the electrons to the main respiratory chain via ETF-ubiquinone oxidoreductase (ETF dehydrogenase). The sequence is that of Electron transfer flavoprotein subunit alpha (etfA) from Mycobacterium tuberculosis (strain CDC 1551 / Oshkosh).